The primary structure comprises 159 residues: Transcription repressor OFP6 (159 aa).

The segment at 39-60 (PKRPSSTYRHCHSSISSATPSS) is disordered. Over residues 51-60 (SSISSATPSS) the composition is skewed to low complexity. Positions 70–129 (VEKDSDDPYLDFRQSMLQMILENQIYSKDELRELLQCFLSLNSHYHHGIIVRAFSEIWED) constitute an OVATE domain.

In terms of assembly, interacts with KNAT1 and KNAT7. In terms of tissue distribution, expressed in roots, shoots, rosette and cauline leaves, stems, flower buds and siliques.

It localises to the nucleus. Its function is as follows. Transcriptional repressor that regulates multiple aspects of plant growth and development through the regulation of BEL1-LIKE (BLH) and KNOX TALE (KNAT) homeodomain transcription factors. The polypeptide is Transcription repressor OFP6 (OFP6) (Arabidopsis thaliana (Mouse-ear cress)).